Consider the following 460-residue polypeptide: tRNA modification GTPase MnmE (460 aa).

(6S)-5-formyl-5,6,7,8-tetrahydrofolate-binding residues include arginine 22, glutamate 87, and arginine 126. A TrmE-type G domain is found at 222–381; it reads GLKTAIIGKP…LENTIYNLVF (160 aa). Residue asparagine 232 participates in K(+) binding. Residues 232-237, 251-257, and 276-279 each bind GTP; these read NVGKSS, TDIPGTT, and DTAG. Serine 236 is a binding site for Mg(2+). K(+) contacts are provided by threonine 251, isoleucine 253, and threonine 256. Position 257 (threonine 257) interacts with Mg(2+). A (6S)-5-formyl-5,6,7,8-tetrahydrofolate-binding site is contributed by lysine 460.

The protein belongs to the TRAFAC class TrmE-Era-EngA-EngB-Septin-like GTPase superfamily. TrmE GTPase family. Homodimer. Heterotetramer of two MnmE and two MnmG subunits. It depends on K(+) as a cofactor.

Its subcellular location is the cytoplasm. Functionally, exhibits a very high intrinsic GTPase hydrolysis rate. Involved in the addition of a carboxymethylaminomethyl (cmnm) group at the wobble position (U34) of certain tRNAs, forming tRNA-cmnm(5)s(2)U34. This is tRNA modification GTPase MnmE from Thermoanaerobacter pseudethanolicus (strain ATCC 33223 / 39E) (Clostridium thermohydrosulfuricum).